The primary structure comprises 289 residues: Glycine--tRNA ligase alpha subunit (289 aa).

Belongs to the class-II aminoacyl-tRNA synthetase family. In terms of assembly, tetramer of two alpha and two beta subunits.

Its subcellular location is the cytoplasm. The enzyme catalyses tRNA(Gly) + glycine + ATP = glycyl-tRNA(Gly) + AMP + diphosphate. The protein is Glycine--tRNA ligase alpha subunit of Rickettsia felis (strain ATCC VR-1525 / URRWXCal2) (Rickettsia azadi).